The following is a 388-amino-acid chain: Ribonucleoside-diphosphate reductase subunit beta (388 aa).

3 residues coordinate Fe cation: D84, E115, and H118. Y122 is an active-site residue. Residues E212, E247, and H250 each contribute to the Fe cation site.

The protein belongs to the ribonucleoside diphosphate reductase small chain family. In terms of assembly, heterodimer of a large and a small subunit. The cofactor is Fe cation.

It carries out the reaction a 2'-deoxyribonucleoside 5'-diphosphate + [thioredoxin]-disulfide + H2O = a ribonucleoside 5'-diphosphate + [thioredoxin]-dithiol. Provides the precursors necessary for DNA synthesis. Catalyzes the biosynthesis of deoxyribonucleotides from the corresponding ribonucleotides. This chain is Ribonucleoside-diphosphate reductase subunit beta (NRDB), found in Escherichia coli (Bacteriophage T4).